The primary structure comprises 341 residues: Protein MENT (341 aa).

An N-terminal signal peptide occupies residues 1 to 23 (MVPAAGALLWVLLLNLGPRAAGA). A disordered region spans residues 115-196 (AGKDSTSREL…SPSPTAMPSP (82 aa)). Polar residues predominate over residues 127–155 (ATPNTAGSSSTRFIANSQEPEIRLTSSLP).

In terms of processing, phosphorylation sites are present in the extracellular medium. Plasma. Overexpressed in lymphomas.

It localises to the secreted. Its function is as follows. Involved in control of cellular proliferation. Onconcogenic modifier contributing to the tumor suppressor function of DNMT3B. The sequence is that of Protein MENT (MENT) from Homo sapiens (Human).